We begin with the raw amino-acid sequence, 132 residues long: Small ribosomal subunit protein uS8 (132 aa).

It belongs to the universal ribosomal protein uS8 family. In terms of assembly, part of the 30S ribosomal subunit. Contacts proteins S5 and S12.

In terms of biological role, one of the primary rRNA binding proteins, it binds directly to 16S rRNA central domain where it helps coordinate assembly of the platform of the 30S subunit. The chain is Small ribosomal subunit protein uS8 from Mesorhizobium japonicum (strain LMG 29417 / CECT 9101 / MAFF 303099) (Mesorhizobium loti (strain MAFF 303099)).